The following is a 492-amino-acid chain: V-type proton ATPase subunit B 1 (492 aa).

This sequence belongs to the ATPase alpha/beta chains family. In terms of assembly, V-ATPase is a heteromultimeric enzyme composed of a peripheral catalytic V1 complex (main components: subunits A, B, C, D, E, and F) attached to an integral membrane V0 proton pore complex (main component: the proteolipid protein).

Non-catalytic subunit of the peripheral V1 complex of vacuolar ATPase. V-ATPase is responsible for acidifying a variety of intracellular compartments in eukaryotic cells. This is V-type proton ATPase subunit B 1 from Acetabularia acetabulum (Mermaid's wine glass).